Consider the following 1938-residue polypeptide: Myosin-4 (1938 aa).

The Myosin N-terminal SH3-like domain maps to 33 to 82 (DAKSSVFVADPKESFVKATVQSREGGKVTAKTEAGATVTVKEDQVFPMNP). Position 36 is a phosphoserine (S36). Residues T64 and T69 each carry the phosphothreonine modification. The Myosin motor domain occupies 86-781 (DKIEDMAMMT…LLGLLEEMRD (696 aa)). Residue 179–186 (GESGAGKT) participates in ATP binding. Phosphotyrosine is present on Y389. At S392 the chain carries Phosphoserine. Phosphothreonine is present on T419. At Y424 the chain carries Phosphotyrosine. The tract at residues 658-680 (LNKLMTNLRSTHPHFVRCIIPNE) is actin-binding. Pros-methylhistidine is present on H756. An actin-binding region spans residues 760–774 (KFGHTKVFFKAGLLG). Residues 784–813 (LAQLITRTQAMCRGFLARVEYKKMVERRES) enclose the IQ domain. Residues 845-1926 (SAETEKEMAN…ESQVNKLRVK (1082 aa)) are a coiled coil. Residues S1091, S1095, S1161, and S1236 each carry the phosphoserine modification. T1240 carries the post-translational modification Phosphothreonine. A Phosphoserine modification is found at S1242. T1254 carries the phosphothreonine modification. A Phosphoserine modification is found at S1260. At T1264 the chain carries Phosphothreonine. S1277 carries the phosphoserine modification. T1285 is modified (phosphothreonine). Phosphoserine occurs at positions 1287, 1291, 1302, and 1305. Residue Y1463 is modified to Phosphotyrosine. Position 1466 is a phosphothreonine (T1466). Position 1473 is a phosphoserine (S1473). Y1491 carries the post-translational modification Phosphotyrosine. A Phosphoserine modification is found at S1494. T1500 bears the Phosphothreonine mark. A Phosphoserine modification is found at S1513. T1516 is modified (phosphothreonine). S1541, S1553, S1573, S1599, S1602, S1713, and S1725 each carry phosphoserine. 2 positions are modified to phosphothreonine: T1729 and T1735. S1738 bears the Phosphoserine mark.

It belongs to the TRAFAC class myosin-kinesin ATPase superfamily. Myosin family. Muscle myosin is a hexameric protein that consists of 2 heavy chain subunits (MHC), 2 alkali light chain subunits (MLC) and 2 regulatory light chain subunits (MLC-2).

Its subcellular location is the cytoplasm. It is found in the myofibril. Functionally, muscle contraction. This chain is Myosin-4 (MYH4), found in Oryctolagus cuniculus (Rabbit).